Consider the following 162-residue polypeptide: Ribonuclease P protein component (162 aa).

The disordered stretch occupies residues 1–63 (MDEKDLATQP…PPAAGGKLLS (63 aa)). The segment covering 21–38 (GPHEDPRRQEGVEAEKAE) has biased composition (basic and acidic residues).

This sequence belongs to the RnpA family. In terms of assembly, consists of a catalytic RNA component (M1 or rnpB) and a protein subunit.

The enzyme catalyses Endonucleolytic cleavage of RNA, removing 5'-extranucleotides from tRNA precursor.. In terms of biological role, RNaseP catalyzes the removal of the 5'-leader sequence from pre-tRNA to produce the mature 5'-terminus. It can also cleave other RNA substrates such as 4.5S RNA. The protein component plays an auxiliary but essential role in vivo by binding to the 5'-leader sequence and broadening the substrate specificity of the ribozyme. This is Ribonuclease P protein component from Thermus scotoductus.